A 610-amino-acid chain; its full sequence is Calcium-dependent protein kinase 1 (610 aa).

A lipid anchor (N-myristoyl glycine) is attached at G2. A lipid anchor (S-palmitoyl cysteine) is attached at C5. The disordered stretch occupies residues 17–133 (VSAAMWRPRD…HMKRVSSAGL (117 aa)). Composition is skewed to basic and acidic residues over residues 47–56 (LRSRLSDEVQ) and 70–117 (TDVE…DPPA). The segment covering 118-127 (KPKKPKHMKR) has biased composition (basic residues). The 259-residue stretch at 150-408 (YSLGRKLGQG…AHQVLCHPWV (259 aa)) folds into the Protein kinase domain. ATP contacts are provided by residues 156–164 (LGQGQFGTT) and K179. The active-site Proton acceptor is D274. A Phosphoserine modification is found at S314. An autoinhibitory domain region spans residues 414-444 (APDKPLDSAVLSRMKQFSAMNKFKKMALRVI). EF-hand domains are found at residues 451–486 (EEIA…VGAN), 487–522 (LKES…LNKI), 523–558 (ERED…FGVE), and 559–592 (DVRI…GSIT). D464, D466, S468, Q470, E475, D500, D502, S504, T506, E511, D536, D538, S540, Y542, E547, D570, D572, D574, R576, and E581 together coordinate Ca(2+).

This sequence belongs to the protein kinase superfamily. Ser/Thr protein kinase family. CDPK subfamily. Interacts with 14-3-3 proteins.

The protein localises to the peroxisome membrane. The enzyme catalyses L-seryl-[protein] + ATP = O-phospho-L-seryl-[protein] + ADP + H(+). The catalysed reaction is L-threonyl-[protein] + ATP = O-phospho-L-threonyl-[protein] + ADP + H(+). Activated by calcium. Autophosphorylation may play an important role in the regulation of the kinase activity. May play a role in signal transduction pathways that involve calcium as a second messenger. Phosphorylates the Ca(2+)-ATPase ACA2 resulting in the inhibition of its calcium activation. The protein is Calcium-dependent protein kinase 1 (CPK1) of Arabidopsis thaliana (Mouse-ear cress).